The following is an 88-amino-acid chain: Small ribosomal subunit protein uS15 (88 aa).

This sequence belongs to the universal ribosomal protein uS15 family. In terms of assembly, part of the 30S ribosomal subunit. Forms a bridge to the 50S subunit in the 70S ribosome, contacting the 23S rRNA.

One of the primary rRNA binding proteins, it binds directly to 16S rRNA where it helps nucleate assembly of the platform of the 30S subunit by binding and bridging several RNA helices of the 16S rRNA. Its function is as follows. Forms an intersubunit bridge (bridge B4) with the 23S rRNA of the 50S subunit in the ribosome. This is Small ribosomal subunit protein uS15 from Psychrobacter cryohalolentis (strain ATCC BAA-1226 / DSM 17306 / VKM B-2378 / K5).